The following is a 473-amino-acid chain: Bifunctional protein HldE (473 aa).

The tract at residues 1-318 (MKLSMPRFDQ…RAIQREEGSE (318 aa)) is ribokinase. 194–197 (NLSE) contacts ATP. Residue Asp-263 is part of the active site. A cytidylyltransferase region spans residues 343–473 (FTNGCFDILH…TAIVEKIRKN (131 aa)).

In the N-terminal section; belongs to the carbohydrate kinase PfkB family. It in the C-terminal section; belongs to the cytidylyltransferase family. As to quaternary structure, homodimer.

The catalysed reaction is D-glycero-beta-D-manno-heptose 7-phosphate + ATP = D-glycero-beta-D-manno-heptose 1,7-bisphosphate + ADP + H(+). It catalyses the reaction D-glycero-beta-D-manno-heptose 1-phosphate + ATP + H(+) = ADP-D-glycero-beta-D-manno-heptose + diphosphate. Its pathway is nucleotide-sugar biosynthesis; ADP-L-glycero-beta-D-manno-heptose biosynthesis; ADP-L-glycero-beta-D-manno-heptose from D-glycero-beta-D-manno-heptose 7-phosphate: step 1/4. It functions in the pathway nucleotide-sugar biosynthesis; ADP-L-glycero-beta-D-manno-heptose biosynthesis; ADP-L-glycero-beta-D-manno-heptose from D-glycero-beta-D-manno-heptose 7-phosphate: step 3/4. Its function is as follows. Catalyzes the phosphorylation of D-glycero-D-manno-heptose 7-phosphate at the C-1 position to selectively form D-glycero-beta-D-manno-heptose-1,7-bisphosphate. Catalyzes the ADP transfer from ATP to D-glycero-beta-D-manno-heptose 1-phosphate, yielding ADP-D-glycero-beta-D-manno-heptose. In Pseudomonas putida (strain GB-1), this protein is Bifunctional protein HldE.